The following is a 435-amino-acid chain: 3-phosphoshikimate 1-carboxyvinyltransferase (435 aa).

K22, S23, and R27 together coordinate 3-phosphoshikimate. K22 is a phosphoenolpyruvate binding site. The phosphoenolpyruvate site is built by G95 and R123. The 3-phosphoshikimate site is built by S168, Q170, D319, and K346. Q170 contributes to the phosphoenolpyruvate binding site. D319 (proton acceptor) is an active-site residue. 2 residues coordinate phosphoenolpyruvate: R350 and R393.

This sequence belongs to the EPSP synthase family. In terms of assembly, monomer.

It localises to the cytoplasm. It carries out the reaction 3-phosphoshikimate + phosphoenolpyruvate = 5-O-(1-carboxyvinyl)-3-phosphoshikimate + phosphate. The protein operates within metabolic intermediate biosynthesis; chorismate biosynthesis; chorismate from D-erythrose 4-phosphate and phosphoenolpyruvate: step 6/7. Functionally, catalyzes the transfer of the enolpyruvyl moiety of phosphoenolpyruvate (PEP) to the 5-hydroxyl of shikimate-3-phosphate (S3P) to produce enolpyruvyl shikimate-3-phosphate and inorganic phosphate. The polypeptide is 3-phosphoshikimate 1-carboxyvinyltransferase (Chloroflexus aggregans (strain MD-66 / DSM 9485)).